We begin with the raw amino-acid sequence, 582 residues long: Phosphoglucomutase, cytoplasmic (582 aa).

The alpha-D-glucose 1,6-bisphosphate site is built by Arg25 and Ser124. Ser124 (phosphoserine intermediate) is an active-site residue. 4 residues coordinate Mg(2+): Ser124, Asp300, Asp302, and Asp304. Ser124 is subject to Phosphoserine. Positions 304, 305, 368, 387, 389, and 400 each coordinate alpha-D-glucose 1,6-bisphosphate.

This sequence belongs to the phosphohexose mutase family. Monomer. It depends on Mg(2+) as a cofactor.

Its subcellular location is the cytoplasm. It catalyses the reaction alpha-D-glucose 1-phosphate = alpha-D-glucose 6-phosphate. It carries out the reaction O-phospho-L-seryl-[protein] + alpha-D-glucose 1-phosphate = alpha-D-glucose 1,6-bisphosphate + L-seryl-[protein]. The enzyme catalyses alpha-D-glucose 1,6-bisphosphate + L-seryl-[protein] = O-phospho-L-seryl-[protein] + alpha-D-glucose 6-phosphate. Catalyzes the reversible isomerization of alpha-D-glucose 1-phosphate to alpha-D-glucose 6-phosphate. The mechanism proceeds via the intermediate compound alpha-D-glucose 1,6-bisphosphate. This enzyme participates in both the breakdown and synthesis of glucose. This chain is Phosphoglucomutase, cytoplasmic (PGM1), found in Pisum sativum (Garden pea).